Reading from the N-terminus, the 292-residue chain is Glutamate racemase (292 aa).

Substrate is bound by residues 28–29 (DS) and 60–61 (YG). C91 acts as the Proton donor/acceptor in catalysis. Residue 92 to 93 (NT) participates in substrate binding. C200 acts as the Proton donor/acceptor in catalysis. Position 201–202 (201–202 (TH)) interacts with substrate.

This sequence belongs to the aspartate/glutamate racemases family.

It catalyses the reaction L-glutamate = D-glutamate. It functions in the pathway cell wall biogenesis; peptidoglycan biosynthesis. Functionally, provides the (R)-glutamate required for cell wall biosynthesis. The protein is Glutamate racemase of Trichormus variabilis (strain ATCC 29413 / PCC 7937) (Anabaena variabilis).